Consider the following 573-residue polypeptide: 2-succinyl-5-enolpyruvyl-6-hydroxy-3-cyclohexene-1-carboxylate synthase (573 aa).

This sequence belongs to the TPP enzyme family. MenD subfamily. As to quaternary structure, homodimer. It depends on Mg(2+) as a cofactor. The cofactor is Mn(2+). Requires thiamine diphosphate as cofactor.

It carries out the reaction isochorismate + 2-oxoglutarate + H(+) = 5-enolpyruvoyl-6-hydroxy-2-succinyl-cyclohex-3-ene-1-carboxylate + CO2. It functions in the pathway quinol/quinone metabolism; 1,4-dihydroxy-2-naphthoate biosynthesis; 1,4-dihydroxy-2-naphthoate from chorismate: step 2/7. The protein operates within quinol/quinone metabolism; menaquinone biosynthesis. Catalyzes the thiamine diphosphate-dependent decarboxylation of 2-oxoglutarate and the subsequent addition of the resulting succinic semialdehyde-thiamine pyrophosphate anion to isochorismate to yield 2-succinyl-5-enolpyruvyl-6-hydroxy-3-cyclohexene-1-carboxylate (SEPHCHC). This is 2-succinyl-5-enolpyruvyl-6-hydroxy-3-cyclohexene-1-carboxylate synthase from Shewanella oneidensis (strain ATCC 700550 / JCM 31522 / CIP 106686 / LMG 19005 / NCIMB 14063 / MR-1).